The sequence spans 367 residues: DNA replication and repair protein RecF (367 aa).

Residue 30 to 37 participates in ATP binding; the sequence is GDNAQGKT.

This sequence belongs to the RecF family.

It is found in the cytoplasm. In terms of biological role, the RecF protein is involved in DNA metabolism; it is required for DNA replication and normal SOS inducibility. RecF binds preferentially to single-stranded, linear DNA. It also seems to bind ATP. The protein is DNA replication and repair protein RecF of Clostridium beijerinckii (strain ATCC 51743 / NCIMB 8052) (Clostridium acetobutylicum).